The chain runs to 349 residues: Probable dual-specificity RNA methyltransferase RlmN (349 aa).

Glu94 acts as the Proton acceptor in catalysis. Residues 100–334 enclose the Radical SAM core domain; the sequence is TETRTTACVS…VKVRRSRGKD (235 aa). Residues Cys107 and Cys339 are joined by a disulfide bond. [4Fe-4S] cluster contacts are provided by Cys114, Cys118, and Cys121. S-adenosyl-L-methionine-binding positions include 165–166, Ser197, 220–222, and Asn296; these read GE and SLH. The active-site S-methylcysteine intermediate is Cys339.

The protein belongs to the radical SAM superfamily. RlmN family. [4Fe-4S] cluster is required as a cofactor.

Its subcellular location is the cytoplasm. The catalysed reaction is adenosine(2503) in 23S rRNA + 2 reduced [2Fe-2S]-[ferredoxin] + 2 S-adenosyl-L-methionine = 2-methyladenosine(2503) in 23S rRNA + 5'-deoxyadenosine + L-methionine + 2 oxidized [2Fe-2S]-[ferredoxin] + S-adenosyl-L-homocysteine. It carries out the reaction adenosine(37) in tRNA + 2 reduced [2Fe-2S]-[ferredoxin] + 2 S-adenosyl-L-methionine = 2-methyladenosine(37) in tRNA + 5'-deoxyadenosine + L-methionine + 2 oxidized [2Fe-2S]-[ferredoxin] + S-adenosyl-L-homocysteine. Functionally, specifically methylates position 2 of adenine 2503 in 23S rRNA and position 2 of adenine 37 in tRNAs. This chain is Probable dual-specificity RNA methyltransferase RlmN, found in Flavobacterium johnsoniae (strain ATCC 17061 / DSM 2064 / JCM 8514 / BCRC 14874 / CCUG 350202 / NBRC 14942 / NCIMB 11054 / UW101) (Cytophaga johnsonae).